The following is a 144-amino-acid chain: 3-dehydroquinate dehydratase (144 aa).

Residue Y24 is the Proton acceptor of the active site. Substrate is bound by residues N76, H82, and D89. H102 functions as the Proton donor in the catalytic mechanism. Substrate-binding positions include 103–104 (LS) and R113.

This sequence belongs to the type-II 3-dehydroquinase family. As to quaternary structure, homododecamer.

It catalyses the reaction 3-dehydroquinate = 3-dehydroshikimate + H2O. Its pathway is metabolic intermediate biosynthesis; chorismate biosynthesis; chorismate from D-erythrose 4-phosphate and phosphoenolpyruvate: step 3/7. Functionally, catalyzes a trans-dehydration via an enolate intermediate. In Nitrosomonas europaea (strain ATCC 19718 / CIP 103999 / KCTC 2705 / NBRC 14298), this protein is 3-dehydroquinate dehydratase.